Consider the following 321-residue polypeptide: Fructose-1,6-bisphosphatase 2 class 2 (321 aa).

The Mn(2+) site is built by Asp-32, Glu-56, Asp-84, and Glu-87. Substrate contacts are provided by residues 87 to 89 (EGT), Tyr-118, 163 to 165 (KPR), 185 to 187 (DGD), and Gly-209. Glu-212 contributes to the Mn(2+) binding site.

This sequence belongs to the FBPase class 2 family. As to quaternary structure, homodimer. Mn(2+) serves as cofactor.

The catalysed reaction is beta-D-fructose 1,6-bisphosphate + H2O = beta-D-fructose 6-phosphate + phosphate. Competitively inhibited by low concentrations of phosphate (IC50 of 1.2 mM) and is also sensitive to Li(+) (IC50 of 15.8 mM). Also inhibited by 1 mM ATP or 50 mM KCl (60% and 20% residual activity, respectively). Slightly activated (40-50%) by the addition of 1 mM dithiothreitol in vitro. Its function is as follows. Catalyzes the hydrolysis of fructose 1,6-bisphosphate to fructose 6-phosphate. Also displays a low activity toward glucose 1,6-bisphosphate, and no activity against ribulose 1,5-bisphosphate, fructose 2,6-bisphosphate, or fructose 1-phosphate. The polypeptide is Fructose-1,6-bisphosphatase 2 class 2 (yggF) (Escherichia coli (strain K12)).